The chain runs to 377 residues: MRYCRELMRRPSITPEDAGCQQWLGERLVAMGFDVSHYQDKGVSNLLASFDERPAQLALAGHTDVVPPGDLSRWQTPPFAATLVDGMLIGRGAVDMKSGLAVMLAAVEDHIACYGLPKANWQFIVTSDEEGEAEHGTRTLVERLKAQSRLPKYCVVAEPTADKQAGDVIKIGRRGAISARLTLKGKQGHVAYPKNAVNALHMAARVMQALEALIWDEGSDDFPGTSLQVTHVDSGAFTDNIVPGSCEICFNIRYSYRYSEAGIMARIQACLDGLSLGEDAISLRWERGCQPYHTQENDEQSLIAQVEAAIFEVTASFPRLSTSGGTSDGRFLSSPQTQVIELGLPNRTIHQVNERVELAQIVRLYRIYRALLTRFHD.

His62 contacts Zn(2+). Asp64 is an active-site residue. A Zn(2+)-binding site is contributed by Asp95. Glu129 functions as the Proton acceptor in the catalytic mechanism. Glu130, Glu158, and His350 together coordinate Zn(2+).

The protein belongs to the peptidase M20A family. DapE subfamily. Homodimer. Zn(2+) serves as cofactor. The cofactor is Co(2+).

It carries out the reaction N-succinyl-(2S,6S)-2,6-diaminopimelate + H2O = (2S,6S)-2,6-diaminopimelate + succinate. It functions in the pathway amino-acid biosynthesis; L-lysine biosynthesis via DAP pathway; LL-2,6-diaminopimelate from (S)-tetrahydrodipicolinate (succinylase route): step 3/3. Its function is as follows. Catalyzes the hydrolysis of N-succinyl-L,L-diaminopimelic acid (SDAP), forming succinate and LL-2,6-diaminopimelate (DAP), an intermediate involved in the bacterial biosynthesis of lysine and meso-diaminopimelic acid, an essential component of bacterial cell walls. The sequence is that of Succinyl-diaminopimelate desuccinylase 2 from Shewanella loihica (strain ATCC BAA-1088 / PV-4).